A 601-amino-acid chain; its full sequence is Amino-acid acetyltransferase, mitochondrial (601 aa).

An N-acetyltransferase domain is found at 401–558 (FTMDNLIASK…KKKQNNKKKK (158 aa)).

The protein belongs to the acetyltransferase family.

It is found in the mitochondrion. It catalyses the reaction L-glutamate + acetyl-CoA = N-acetyl-L-glutamate + CoA + H(+). It functions in the pathway amino-acid biosynthesis; L-arginine biosynthesis; N(2)-acetyl-L-ornithine from L-glutamate: step 1/4. In terms of biological role, N-acetylglutamate synthase involved in arginine biosynthesis. This chain is Amino-acid acetyltransferase, mitochondrial (ARG2), found in Lodderomyces elongisporus (strain ATCC 11503 / CBS 2605 / JCM 1781 / NBRC 1676 / NRRL YB-4239) (Yeast).